The chain runs to 933 residues: DNA repair-scaffolding protein (933 aa).

Disordered stretches follow at residues 1–34, 67–174, and 205–224; these read MSGA…LRRG, SEKT…KGTL, and YSSD…IDSE. Basic and acidic residues-rich tracts occupy residues 16-29, 71-87, and 119-132; these read WHIE…ERSQ, GITE…KTET, and RDGR…RLGD. Residues 138-148 are compositionally biased toward acidic residues; it reads PEDEDIEDELQ. Residues 175–469 are necessary for interaction with RAD51; that stretch reads DISDCDSCAS…GTGWTHGHEK (295 aa). Positions 214-224 are enriched in basic and acidic residues; it reads DPEHSLFIDSE.

In terms of assembly, found in a complex, at least composed of BLM, RAD51 and SPIDR; the complex formation is mediated by SPIDR. Interacts (via C-terminal region) with BLM; the interaction is direct. Interacts with RAD51; the interaction is direct. Interacts (via the C-terminal region) with FIGNL1 (via N-terminal one-half region); the interaction is direct.

The protein resides in the nucleus. In terms of biological role, plays a role in DNA double-strand break (DBS) repair via homologous recombination (HR). Serves as a scaffolding protein that helps to promote the recruitment of DNA-processing enzymes like the helicase BLM and recombinase RAD51 to site of DNA damage, and hence contributes to maintain genomic integrity. The polypeptide is DNA repair-scaffolding protein (Spidr) (Mus musculus (Mouse)).